The following is a 292-amino-acid chain: Homoserine kinase (292 aa).

84-94 (PLARGMGSSSA) contacts ATP.

Belongs to the GHMP kinase family. Homoserine kinase subfamily.

Its subcellular location is the cytoplasm. The enzyme catalyses L-homoserine + ATP = O-phospho-L-homoserine + ADP + H(+). It participates in amino-acid biosynthesis; L-threonine biosynthesis; L-threonine from L-aspartate: step 4/5. Its function is as follows. Catalyzes the ATP-dependent phosphorylation of L-homoserine to L-homoserine phosphate. This Thermus thermophilus (strain ATCC BAA-163 / DSM 7039 / HB27) protein is Homoserine kinase.